The chain runs to 714 residues: Penicillin-binding protein 1F (714 aa).

Topologically, residues 1–12 (MFKIKKKKLFIP) are cytoplasmic. Residues 13–33 (IIILVLTAFLALIGYISIIFL) traverse the membrane as a helical; Signal-anchor for type II membrane protein segment. At 34–714 (GHYVIDEKKL…DYVQPKLFSS (681 aa)) the chain is on the extracellular side. Residues 49–217 (SKIVDQNGDE…STYSPILHPD (169 aa)) form a transglycosylase region. Glutamate 87 serves as the catalytic Proton donor; for transglycosylase activity. The segment at 297-592 (SKLQKTAYQV…SSYPTRLFKD (296 aa)) is transpeptidase. Residue serine 359 is the Acyl-ester intermediate; for transpeptidase activity of the active site.

In the N-terminal section; belongs to the glycosyltransferase 51 family. The protein in the C-terminal section; belongs to the transpeptidase family.

The protein resides in the cell membrane. It carries out the reaction [GlcNAc-(1-&gt;4)-Mur2Ac(oyl-L-Ala-gamma-D-Glu-L-Lys-D-Ala-D-Ala)](n)-di-trans,octa-cis-undecaprenyl diphosphate + beta-D-GlcNAc-(1-&gt;4)-Mur2Ac(oyl-L-Ala-gamma-D-Glu-L-Lys-D-Ala-D-Ala)-di-trans,octa-cis-undecaprenyl diphosphate = [GlcNAc-(1-&gt;4)-Mur2Ac(oyl-L-Ala-gamma-D-Glu-L-Lys-D-Ala-D-Ala)](n+1)-di-trans,octa-cis-undecaprenyl diphosphate + di-trans,octa-cis-undecaprenyl diphosphate + H(+). It catalyses the reaction Preferential cleavage: (Ac)2-L-Lys-D-Ala-|-D-Ala. Also transpeptidation of peptidyl-alanyl moieties that are N-acyl substituents of D-alanine.. It functions in the pathway cell wall biogenesis; peptidoglycan biosynthesis. Cell wall formation. May be involved in outgrowth of the germinated spore or it could function in the synthesis of the germ cell wall. This is Penicillin-binding protein 1F (pbpF) from Bacillus subtilis (strain 168).